The chain runs to 657 residues: Glycogen debranching enzyme (657 aa).

The Nucleophile role is filled by aspartate 336. Catalysis depends on glutamate 371, which acts as the Proton donor. A compositionally biased stretch (basic and acidic residues) spans 458–467 (NEANGEENRD). A disordered region spans residues 458 to 479 (NEANGEENRDGTNNNYSNNHGK).

The protein belongs to the glycosyl hydrolase 13 family.

The catalysed reaction is Hydrolysis of (1-&gt;6)-alpha-D-glucosidic linkages to branches with degrees of polymerization of three or four glucose residues in limit dextrin.. The protein operates within glycan degradation; glycogen degradation. Functionally, removes maltotriose and maltotetraose chains that are attached by 1,6-alpha-linkage to the limit dextrin main chain, generating a debranched limit dextrin. The polypeptide is Glycogen debranching enzyme (Escherichia coli O139:H28 (strain E24377A / ETEC)).